The chain runs to 265 residues: Methyl-coenzyme M reductase II subunit gamma (265 aa).

R123 lines the coenzyme M pocket.

This sequence belongs to the methyl-coenzyme M reductase gamma subunit family. MCR is a hexamer of two alpha, two beta, and two gamma chains, forming a dimer of heterotrimers. Requires coenzyme F430 as cofactor.

It carries out the reaction coenzyme B + methyl-coenzyme M = methane + coenzyme M-coenzyme B heterodisulfide. The protein operates within one-carbon metabolism; methyl-coenzyme M reduction; methane from methyl-coenzyme M: step 1/1. Its function is as follows. Component of the methyl-coenzyme M reductase (MCR) I that catalyzes the reductive cleavage of methyl-coenzyme M (CoM-S-CH3 or 2-(methylthio)ethanesulfonate) using coenzyme B (CoB or 7-mercaptoheptanoylthreonine phosphate) as reductant which results in the production of methane and the mixed heterodisulfide of CoB and CoM (CoM-S-S-CoB). This is the final step in methanogenesis. The polypeptide is Methyl-coenzyme M reductase II subunit gamma (mrtG) (Methanothermobacter marburgensis (strain ATCC BAA-927 / DSM 2133 / JCM 14651 / NBRC 100331 / OCM 82 / Marburg) (Methanobacterium thermoautotrophicum)).